The sequence spans 376 residues: UDP-N-acetylglucosamine--N-acetylmuramyl-(pentapeptide) pyrophosphoryl-undecaprenol N-acetylglucosamine transferase (376 aa).

Residues 12–14 (TGG), Asn-125, Arg-165, Ser-197, and Gln-296 each bind UDP-N-acetyl-alpha-D-glucosamine.

The protein belongs to the glycosyltransferase 28 family. MurG subfamily.

The protein localises to the cell inner membrane. It carries out the reaction di-trans,octa-cis-undecaprenyl diphospho-N-acetyl-alpha-D-muramoyl-L-alanyl-D-glutamyl-meso-2,6-diaminopimeloyl-D-alanyl-D-alanine + UDP-N-acetyl-alpha-D-glucosamine = di-trans,octa-cis-undecaprenyl diphospho-[N-acetyl-alpha-D-glucosaminyl-(1-&gt;4)]-N-acetyl-alpha-D-muramoyl-L-alanyl-D-glutamyl-meso-2,6-diaminopimeloyl-D-alanyl-D-alanine + UDP + H(+). It participates in cell wall biogenesis; peptidoglycan biosynthesis. Functionally, cell wall formation. Catalyzes the transfer of a GlcNAc subunit on undecaprenyl-pyrophosphoryl-MurNAc-pentapeptide (lipid intermediate I) to form undecaprenyl-pyrophosphoryl-MurNAc-(pentapeptide)GlcNAc (lipid intermediate II). This chain is UDP-N-acetylglucosamine--N-acetylmuramyl-(pentapeptide) pyrophosphoryl-undecaprenol N-acetylglucosamine transferase, found in Protochlamydia amoebophila (strain UWE25).